A 1434-amino-acid polypeptide reads, in one-letter code: MLNDILSRVARVGAMHAGNRPNPPDDRPQPCRGKPPTSPGKTIKHKSFLGALAGAVAGALVAAAVAAAAVFLVGVTGGLAVAAVGALAVFAAGDLISAVTNKVSAMVDSASPAFGPVASGSGNVFVEKQPVARATKDTVACTKHNSPQLIAQGSESVFVNDAPAARIDDKTVCGATVKEGASTVFFGSGQGTYLDIADEFSWWEKALLIAVEFLVPPSRGMLKGLGKLFIRGPKAVLRGSRAGAKWIAGRLADKSSCASKAFKASSGLTRAKAAVKAFLKDPVYIASGEVIESRTDIELGQTLPLAFERTYRSASVHIGLLGRGWHDSWSEVATVTRDGLNTHVVITLAQGYDIDFTFHQDVQAVYCPHYPEFTLHRRGDGFSLWHRDQQTWRDFSVVQGERRLLSAIHDSHDNRIELVRDPKGYLRQVRHSDGVTLLLVWQGEFLHQIQRIDGGQKTLLAEYRQDEQGRLVEANATQAYHLYYDYDAAHRLTRWHDNDQTWARYEYDAQGRCVYTTCADGFLTARFDYLPDRVVMTDGLGQCSEFGFNDLFLMSWEKSPLGHVTRYEYDDYGNLLREISPAGRVVEFTYLDDTGRVSTFTDASGHQWQYDYDAAQRLCGVTDPLGREWGWMYDAEGNPERLTGPDASEVRFTWNRYGLLTQVSDAAGEVQARLQYDHRQRLLSATDAESRTRQLRYDGQDRVVQWQRADGARFRLGYRRASWTLPEQLIRPDDKEEQRQYDRHNNLLSYVDGNGALWRQTFGPFDLLTARTDAEGRTWHYAYDKESQQLTTVIAPDGSHWQWWLDADGRVIRERDMTGTETHYDYDEDGLCIRVRNGEGDTRHFLYDARGLLLRETAPDDTLHYRYDAVGRLTEVSSSTAHVQLEYDLRDRMVREWHNGTLLTRQVDDAARTVTRTLTWDGDADDTINALAPLTSLFHYTRTGELRQVQLPDGADLTLTHDAAGRESHRTGGSGFVQQREYDVMGWLTREMSGAQHDGHLLATQTREYRYDGAGNLTGVRHNRDAEGYRLDATGRVQEILSGGAGKPVDTTARFLYTRTGLPQEAGRLTEWQAGRLVQHDDTHYQYDRAGRLIRKQVVQPGYRPQVWQYRWDSRNQLRVVDTPNGERWLYRYDPFGRRVGKRCDQKAEEIRYLWDGDQIAEIRHYRHGQLIQRRHWVYNGWELVVQQRQHTGGDWETDFVTSSQNGTPQALFTPDGTLRWQAPKATLWGQRQAEKSESPDPGLAFAGQLRDSESGLCYNRFRYYDPAGGCYVSPDPIGIAGGESNYGYVSNPMCWVDPFGLAKCPTLAHGANGEILSAKATVSKAELRTGSGTNQSSRDYARSLGNQTDDAGHILGNVLGGQGGKGNVFPQLPAINRGQYRDFEKVVKDYIGQHGSVDIEWAFKYGNGGTRPTEIYYDVYQNGQKVFGRIFNN.

The disordered stretch occupies residues 14-42 (AMHAGNRPNPPDDRPQPCRGKPPTSPGKT). Transmembrane regions (helical) follow at residues 48-68 (FLGALAGAVAGALVAAAVAAA) and 70-90 (VFLVGVTGGLAVAAVGALAVF). YD repeat units lie at residues 486–521 (YDAAHRLTRWHDNDQTWARYEYDAQGRCVYTTCADG), 592–628 (DDTGRVSTFTDASGHQWQYDYDAAQRLCGVTDPLGRE), and 847–876 (YDARGLLLRETAPDDTLHYRYDAVGRLTEV).

It belongs to the RHS/WapA nuclease family.

It localises to the membrane. Toxic component of a toxin-immunity protein module, which functions as a cellular contact-dependent growth inhibition (CDI) system. This protein may be a nuclease that is specifically inhibited by its cognate immunity protein RhsAI. Upon expression of the C-terminus (residues 1284-1434) in E.coli growth is inhibited, cells elongate, nucleoids condense and plasmid DNA is degraded; these effects are blocked specifically by cognate immunity protein RshIA. Cell contact is necessary for growth inhibition. This chain is Probable deoxyribonuclease RhsA (rhsA), found in Dickeya dadantii (strain 3937) (Erwinia chrysanthemi (strain 3937)).